The following is a 450-amino-acid chain: L-galactonate dehydratase (450 aa).

The active site involves Lys-221. Residues Asp-251, Glu-277, and Glu-306 each coordinate Mg(2+). The active site involves His-356.

It belongs to the mandelate racemase/muconate lactonizing enzyme family. Requires Mg(2+) as cofactor.

The catalysed reaction is L-galactonate = 2-dehydro-3-deoxy-L-galactonate + H2O. It functions in the pathway carbohydrate acid metabolism. Mediates the conversion of L-galactonate to 2-dehydro-3-deoxy-L-galactonate, the second step in D-galacturonate catabolic process. In Hypocrea jecorina (Trichoderma reesei), this protein is L-galactonate dehydratase (lgd1).